The primary structure comprises 294 residues: Pyridoxal 5'-phosphate synthase subunit PdxS (294 aa).

D-ribose 5-phosphate is bound at residue Asp-24. Lys-81 functions as the Schiff-base intermediate with D-ribose 5-phosphate in the catalytic mechanism. D-ribose 5-phosphate is bound at residue Gly-153. Residue Arg-165 coordinates D-glyceraldehyde 3-phosphate. D-ribose 5-phosphate-binding positions include Gly-214 and 235-236; that span reads GS.

It belongs to the PdxS/SNZ family. As to quaternary structure, in the presence of PdxT, forms a dodecamer of heterodimers.

The enzyme catalyses aldehydo-D-ribose 5-phosphate + D-glyceraldehyde 3-phosphate + L-glutamine = pyridoxal 5'-phosphate + L-glutamate + phosphate + 3 H2O + H(+). It participates in cofactor biosynthesis; pyridoxal 5'-phosphate biosynthesis. Catalyzes the formation of pyridoxal 5'-phosphate from ribose 5-phosphate (RBP), glyceraldehyde 3-phosphate (G3P) and ammonia. The ammonia is provided by the PdxT subunit. Can also use ribulose 5-phosphate and dihydroxyacetone phosphate as substrates, resulting from enzyme-catalyzed isomerization of RBP and G3P, respectively. The chain is Pyridoxal 5'-phosphate synthase subunit PdxS from Bacillus pumilus (strain SAFR-032).